The primary structure comprises 383 residues: S-adenosylmethionine synthase (383 aa).

Position 15 (His15) interacts with ATP. Asp17 lines the Mg(2+) pocket. Glu43 contributes to the K(+) binding site. The L-methionine site is built by Glu56 and Gln99. Positions 99-109 are flexible loop; it reads QSPDINQGVDR. Residues 164–166, 230–231, Asp239, 245–246, Ala262, and Lys266 each bind ATP; these read DAK, RF, and RK. Asp239 provides a ligand contact to L-methionine. Lys270 provides a ligand contact to L-methionine.

This sequence belongs to the AdoMet synthase family. As to quaternary structure, homotetramer; dimer of dimers. It depends on Mg(2+) as a cofactor. K(+) serves as cofactor.

It localises to the cytoplasm. The catalysed reaction is L-methionine + ATP + H2O = S-adenosyl-L-methionine + phosphate + diphosphate. The protein operates within amino-acid biosynthesis; S-adenosyl-L-methionine biosynthesis; S-adenosyl-L-methionine from L-methionine: step 1/1. Its function is as follows. Catalyzes the formation of S-adenosylmethionine (AdoMet) from methionine and ATP. The overall synthetic reaction is composed of two sequential steps, AdoMet formation and the subsequent tripolyphosphate hydrolysis which occurs prior to release of AdoMet from the enzyme. The protein is S-adenosylmethionine synthase of Shewanella denitrificans (strain OS217 / ATCC BAA-1090 / DSM 15013).